We begin with the raw amino-acid sequence, 131 residues long: Small ribosomal subunit protein uS8 (131 aa).

This sequence belongs to the universal ribosomal protein uS8 family. As to quaternary structure, part of the 30S ribosomal subunit. Contacts proteins S5 and S12.

One of the primary rRNA binding proteins, it binds directly to 16S rRNA central domain where it helps coordinate assembly of the platform of the 30S subunit. The chain is Small ribosomal subunit protein uS8 from Azoarcus sp. (strain BH72).